The sequence spans 95 residues: NELL2-interacting cell ontogeny regulator 1 (95 aa).

The signal sequence occupies residues 1–34 (MAPPPACRSPMSPPPPPLLLLLLSLALLGARARA).

Belongs to the NICOL family. As to quaternary structure, interacts with NELL2; triggers epididymal differentiation. Interacts with cell surface receptor TFRC; the interaction mediates uptake of NICOL1 into fibroblasts. Detected in the brain (at protein level). Also expressed at low levels in the kidney, primarily in tubular epithelial cells.

The protein resides in the secreted. The protein localises to the cytoplasm. It is found in the perinuclear region. In terms of biological role, mRNA-binding protein which interacts with a range of target mRNAs including SERPINE1, ACTA2, CCN2 and COL4A1 and may promote extracellular matrix production. Binds to the 3'-UTR of SERPINE1 mRNA and stabilizes the mRNA, possibly by competing for binding with SERBP1 and preventing SERBP1-mediated mRNA degradation. Also binds to the 3'-UTR of ACTA2. Testis-derived lumicrine factor that triggers epididymal differentiation and sperm maturation. This Homo sapiens (Human) protein is NELL2-interacting cell ontogeny regulator 1.